The chain runs to 444 residues: Maintenance of mitochondrial morphology protein 1 (444 aa).

The segment covering 1–16 (MKGVENTLSQSESVNR) has biased composition (polar residues). Residues 1 to 20 (MKGVENTLSQSESVNRGYNG) form a disordered region. At 1 to 107 (MKGVENTLSQ…TFSSRSFAEG (107 aa)) the chain is on the lumenal side. Residues 108–128 (LVVGQLSVIVVLIFFIKFFIF) traverse the membrane as a helical segment. Residues 129–444 (SDGPAKTGGG…QEEDPSRAPE (316 aa)) are Cytoplasmic-facing. The tract at residues 136-157 (GGGGGSSAESRSSGFTGSPLTS) is disordered. Positions 142–157 (SAESRSSGFTGSPLTS) are enriched in low complexity. The region spanning 204–418 (SPESLDWFNV…EPRFQFVKLP (215 aa)) is the SMP-LTD domain. The disordered stretch occupies residues 425–444 (KNTREEKSDMQEEDPSRAPE). Basic and acidic residues predominate over residues 426-444 (NTREEKSDMQEEDPSRAPE).

Belongs to the MMM1 family. In terms of assembly, homodimer. Component of the ER-mitochondria encounter structure (ERMES) or MDM complex, composed of MMM1, MDM10, MDM12 and MDM34. An MMM1 homodimer associates with one molecule of MDM12 on each side in a pairwise head-to-tail manner, and the SMP-LTD domains of MMM1 and MDM12 generate a continuous hydrophobic tunnel for phospholipid trafficking.

It is found in the endoplasmic reticulum membrane. Its function is as follows. Component of the ERMES/MDM complex, which serves as a molecular tether to connect the endoplasmic reticulum (ER) and mitochondria. Components of this complex are involved in the control of mitochondrial shape and protein biogenesis, and function in nonvesicular lipid trafficking between the ER and mitochondria. The MDM12-MMM1 subcomplex functions in the major beta-barrel assembly pathway that is responsible for biogenesis of all outer membrane beta-barrel proteins, and acts in a late step after the SAM complex. The MDM10-MDM12-MMM1 subcomplex further acts in the TOM40-specific pathway after the action of the MDM12-MMM1 complex. Essential for establishing and maintaining the structure of mitochondria and maintenance of mtDNA nucleoids. This Eremothecium gossypii (strain ATCC 10895 / CBS 109.51 / FGSC 9923 / NRRL Y-1056) (Yeast) protein is Maintenance of mitochondrial morphology protein 1.